The sequence spans 548 residues: Chaperonin GroEL (548 aa).

Residues 30 to 33 (TLGP), lysine 51, 87 to 91 (DGTTT), glycine 415, 479 to 481 (NAA), and aspartate 495 contribute to the ATP site. Residues 524-548 (LPKEDKSSDSNSSPAGGMGGMGGMM) are disordered. Residues 539–548 (GGMGGMGGMM) show a composition bias toward gly residues.

Belongs to the chaperonin (HSP60) family. In terms of assembly, forms a cylinder of 14 subunits composed of two heptameric rings stacked back-to-back. Interacts with the co-chaperonin GroES.

Its subcellular location is the cytoplasm. It carries out the reaction ATP + H2O + a folded polypeptide = ADP + phosphate + an unfolded polypeptide.. Together with its co-chaperonin GroES, plays an essential role in assisting protein folding. The GroEL-GroES system forms a nano-cage that allows encapsulation of the non-native substrate proteins and provides a physical environment optimized to promote and accelerate protein folding. This is Chaperonin GroEL from Buchnera aphidicola subsp. Myzus persicae (Myzus persicae primary endosymbiont).